The primary structure comprises 364 residues: Anthranilate phosphoribosyltransferase (364 aa).

The span at 1–10 shows a compositional bias: polar residues; the sequence is MTSGPSQPFP. A disordered region spans residues 1–22; the sequence is MTSGPSQPFPSASGPDDGPSWP. Residues Gly101, 104–105, Thr109, 111–114, 129–137, and Gly141 each bind 5-phospho-alpha-D-ribose 1-diphosphate; these read GD, NLST, and KHGNRAASS. An anthranilate-binding site is contributed by Gly101. Ser113 serves as a coordination point for Mg(2+). Position 132 (Asn132) interacts with anthranilate. An anthranilate-binding site is contributed by Arg187. Mg(2+) is bound by residues Asp245 and Glu246.

It belongs to the anthranilate phosphoribosyltransferase family. As to quaternary structure, homodimer. The cofactor is Mg(2+).

It carries out the reaction N-(5-phospho-beta-D-ribosyl)anthranilate + diphosphate = 5-phospho-alpha-D-ribose 1-diphosphate + anthranilate. It participates in amino-acid biosynthesis; L-tryptophan biosynthesis; L-tryptophan from chorismate: step 2/5. Catalyzes the transfer of the phosphoribosyl group of 5-phosphorylribose-1-pyrophosphate (PRPP) to anthranilate to yield N-(5'-phosphoribosyl)-anthranilate (PRA). The chain is Anthranilate phosphoribosyltransferase from Mycolicibacterium smegmatis (strain ATCC 700084 / mc(2)155) (Mycobacterium smegmatis).